Here is a 63-residue protein sequence, read N- to C-terminus: uncharacterized protein (63 aa).

The first 15 residues, 1 to 15 (MRNPVVWGMIYFAVG), serve as a signal peptide directing secretion. Cysteine 16 is lipidated: N-palmitoyl cysteine. The S-diacylglycerol cysteine moiety is linked to residue cysteine 16. The helical transmembrane segment at 34-56 (SILLMVFAAYNISISFKMFAFSF) threads the bilayer.

The protein resides in the cell membrane. This is an uncharacterized protein from Bacillus subtilis (strain 168).